The following is a 325-amino-acid chain: TNFAIP3-interacting protein 3 (325 aa).

Disordered regions lie at residues 1 to 30 (MAHF…STRK) and 84 to 129 (RFLS…RLNE). Over residues 17–28 (STEHKECAEPST) the composition is skewed to basic and acidic residues. The stretch at 27 to 265 (STRKNLMNSL…LEKQLKQMYC (239 aa)) forms a coiled coil. Residues 190-248 (HEEMRTEMEVLKQQVQIYEEDFKKERSDRERLNQEKEELQQINETSQSQLNRLNSQIKA) form a ubiquitin-binding domain (UBD) region.

In terms of assembly, interacts with TNFAIP3. Interacts with polyubiquitin. As to expression, highly expressed in lung, lymph node, thymus and fetal liver. Expressed at lower levels in bone marrow, brain, kidney, spleen, leukocytes and tonsils. Could be detected in heart, salivary gland, adrenal gland, pancreas, ovary and fetal brain. High levels detected in liver, colon, small intestine, muscle, stomach, testis, placenta, thyroid, uterus, prostate, skin and PBL.

Functionally, binds to zinc finger protein TNFAIP3 and inhibits NF-kappa-B activation induced by tumor necrosis factor, Toll-like receptor 4 (TLR4), interleukin-1 and 12-O-tetradecanoylphorbol-13-acetate. Overexpression inhibits NF-kappa-B-dependent gene expression in response to lipopolysaccharide at a level downstream of TRAF6 and upstream of IKBKB. NF-kappa-B inhibition is independent of TNFAIP3 binding. The chain is TNFAIP3-interacting protein 3 from Homo sapiens (Human).